A 510-amino-acid chain; its full sequence is Crotonobetaine/carnitine--CoA ligase (510 aa).

This sequence belongs to the ATP-dependent AMP-binding enzyme family.

It catalyses the reaction 4-(trimethylamino)butanoate + ATP + CoA = 4-(trimethylamino)butanoyl-CoA + AMP + diphosphate. The catalysed reaction is crotonobetaine + ATP + CoA = crotonobetainyl-CoA + AMP + diphosphate. It carries out the reaction (R)-carnitine + ATP + CoA = (R)-carnitinyl-CoA + AMP + diphosphate. Its pathway is amine and polyamine metabolism; carnitine metabolism. Its function is as follows. Catalyzes the transfer of CoA to carnitine, generating the initial carnitinyl-CoA needed for the CaiB reaction cycle. Also has activity toward crotonobetaine and gamma-butyrobetaine. In Shigella flexneri serotype 5b (strain 8401), this protein is Crotonobetaine/carnitine--CoA ligase.